Consider the following 221-residue polypeptide: 2-phospho-L-lactate guanylyltransferase (221 aa).

It belongs to the CofC family. Homodimer.

The enzyme catalyses (2S)-2-phospholactate + GTP + H(+) = (2S)-lactyl-2-diphospho-5'-guanosine + diphosphate. The protein operates within cofactor biosynthesis; coenzyme F420 biosynthesis. Its function is as follows. Guanylyltransferase that catalyzes the activation of (2S)-2-phospholactate (2-PL) as (2S)-lactyl-2-diphospho-5'-guanosine, via the condensation of 2-PL with GTP. It is involved in the biosynthesis of coenzyme F420, a hydride carrier cofactor. This Methanothrix thermoacetophila (strain DSM 6194 / JCM 14653 / NBRC 101360 / PT) (Methanosaeta thermophila) protein is 2-phospho-L-lactate guanylyltransferase.